Here is a 458-residue protein sequence, read N- to C-terminus: MRVLSEYKGKAGELLREHGLSVGDRVRIVRDDGVVVEGIIMPRSELGDDEHIVVKMDNGYNVGVRVDRIEKLEAPGEGHEPSFKPMEGEIEYDPKLPNVSVMSTGGTIACRVDYETGAVKPAFTAEELVGAVPELLDVINIVDARAVLDLLSENMEPKHWMKIAEEVVDALSDPDVEGVVIGHGTDTMAFTAAALSFVIEGLNGPVVLVGAQRSSDRPSSDAASNLIAACAFAGDGEVGEVTVCMHGWTSDEVCLVHRGVRVRKMHTSRRDAFRSVESIPIAKVDVKDLRNPKIEFLRSDYRRPEDGEPEISGGFEEKVALVKFAPGMDPEVLDFYVDRGYRGIVLEGTGLGHVSEQWLESIERAVDDGIAVVMTSQCLYGRVNMNVYRTGRLLRAVGVIPGEDMLPEVAYVKLMYVLDRTDDIKEVERLMRTNIAGEIEGGRVLGGFEPADGPHHRL.

One can recognise an Asparaginase/glutaminase domain in the interval 97–434 (PNVSVMSTGG…KEVERLMRTN (338 aa)). Residues Thr-107, Thr-185, Asp-186, and Lys-264 contribute to the active site.

It belongs to the asparaginase 1 family. GatD subfamily. In terms of assembly, heterodimer of GatD and GatE.

The catalysed reaction is L-glutamyl-tRNA(Gln) + L-glutamine + ATP + H2O = L-glutaminyl-tRNA(Gln) + L-glutamate + ADP + phosphate + H(+). Its function is as follows. Allows the formation of correctly charged Gln-tRNA(Gln) through the transamidation of misacylated Glu-tRNA(Gln) in organisms which lack glutaminyl-tRNA synthetase. The reaction takes place in the presence of glutamine and ATP through an activated gamma-phospho-Glu-tRNA(Gln). The GatDE system is specific for glutamate and does not act on aspartate. This is Glutamyl-tRNA(Gln) amidotransferase subunit D from Methanopyrus kandleri (strain AV19 / DSM 6324 / JCM 9639 / NBRC 100938).